The primary structure comprises 526 residues: MKTKLMITIFSCLLLWSMLLLLSFSNIFKHQLLGATINVGSKDSVKPRDRLLGGLLTADFDEDSCLSRYQSSLYRKPSPYRTSEYLISKLRNYEMLHKRCGPGTDAYKRATEKLGHDHENVGDSSDGECKYIVWVAVYGLGNRILTLASVFLYALLTERIILVDQRKDISDLFCEPFPGTSWLLPLDFPLMGQIDSFNREYSHCYGTMLKNHTINSTTIPSHLYLHLLHDYRDQDKMFFCQKDQSLVDKVPWLVVKSNLYFIPSLWLNPSFQTELIKLFPQKDTVFYHLARYLFHPTNQVWGMVTRSYNAYLSRADEILGIQVRVFSRQTKYFQHVMDQIVACTQREKLLPEFAAQEEAQVTNTSNPSKLKAVLVTSLNPEYSNNLKKMYWEHPTTTGDIVEVYQPSRERFQQTDKKLHDQKALAEMYLLSLTDKLVTSALSTFGYVAQGLGGLKPWILYTPKKFKSPNPPCGRVISMEPCFLTPPVHGCEAKKGINTAKIVPFVRHCEDLRHYGLKLVDDTKNEL.

Residues 1–4 are Cytoplasmic-facing; it reads MKTK. The chain crosses the membrane as a helical; Signal-anchor for type II membrane protein span at residues 5 to 25; it reads LMITIFSCLLLWSMLLLLSFS. At 26–526 the chain is on the lumenal side; the sequence is NIFKHQLLGA…KLVDDTKNEL (501 aa). N-linked (GlcNAc...) asparagine glycosylation is found at N211, N215, and N363.

Belongs to the glycosyltransferase 37 family. Expressed in roots, leaves, stems and seedlings.

Its subcellular location is the golgi apparatus. The protein localises to the golgi stack membrane. The protein operates within protein modification; protein glycosylation. May be involved in cell wall biosynthesis. May act as a fucosyltransferase. This chain is Probable fucosyltransferase 7 (FUT7), found in Arabidopsis thaliana (Mouse-ear cress).